The sequence spans 189 residues: Peptidyl-tRNA hydrolase (189 aa).

Residue Tyr-16 participates in tRNA binding. Catalysis depends on His-21, which acts as the Proton acceptor. Residues Phe-67, Asn-69, and Asn-115 each coordinate tRNA.

It belongs to the PTH family. In terms of assembly, monomer.

It is found in the cytoplasm. It carries out the reaction an N-acyl-L-alpha-aminoacyl-tRNA + H2O = an N-acyl-L-amino acid + a tRNA + H(+). Hydrolyzes ribosome-free peptidyl-tRNAs (with 1 or more amino acids incorporated), which drop off the ribosome during protein synthesis, or as a result of ribosome stalling. Its function is as follows. Catalyzes the release of premature peptidyl moieties from peptidyl-tRNA molecules trapped in stalled 50S ribosomal subunits, and thus maintains levels of free tRNAs and 50S ribosomes. The protein is Peptidyl-tRNA hydrolase of Legionella pneumophila subsp. pneumophila (strain Philadelphia 1 / ATCC 33152 / DSM 7513).